We begin with the raw amino-acid sequence, 578 residues long: Dapdiamide synthesis protein DdaD (578 aa).

In terms of domain architecture, Carrier spans 498–573 (ESISATEHQI…KMAAWLDASS (76 aa)). An O-(pantetheine 4'-phosphoryl)serine modification is found at Ser533.

This sequence belongs to the ATP-dependent AMP-binding enzyme family. Requires pantetheine 4'-phosphate as cofactor.

The protein operates within antibiotic biosynthesis. In terms of biological role, involved in dapdiamide antibiotics biosynthesis. Activates and sequesters N-beta-fumaramoyl-DAP as a covalently tethered thioester for subsequent oxidative modification of the fumaramoyl group. The protein is Dapdiamide synthesis protein DdaD of Enterobacter agglomerans (Erwinia herbicola).